We begin with the raw amino-acid sequence, 405 residues long: Growth/differentiation factor 11 (405 aa).

A signal peptide spans 1 to 20 (MVLAAPLLLGFLLLALELRP). A propeptide spanning residues 21–296 (RGEAAEGPAA…VLENTKRSRR (276 aa)) is cleaved from the precursor. Asn92 carries an N-linked (GlcNAc...) asparagine glycan. Intrachain disulfides connect Cys302-Cys312, Cys311-Cys370, Cys339-Cys402, and Cys343-Cys404.

Belongs to the TGF-beta family. Homodimer; disulfide-linked. Interacts directly with ACVR2B. Interacts directly with ACVR2A. Interacts with ACVR1B, TGFBR1 and ACVR1C in an ACVR2B-dependent manner. Interacts with FST isoform 2/FS288. Post-translationally, synthesized as large precursor molecule that undergoes proteolytic cleavage by furin-like proteases. This produces an inactive form consisting of the mature C-terminal portion non-covalently bound to its cleaved N-terminal propeptide. Activation of the mature form requires additional cleavage of the propeptide by a tolloid-like metalloproteinase. Highly expressed in the developing limb bud, initially detected in the distal mesenchyme, and later localizing to regions around the developing bones. Is also expressed in adult dental pulp and brain.

It localises to the secreted. Its function is as follows. Secreted signal that acts globally to regulate anterior/posterior axial patterning during development. May play critical roles in patterning both mesodermal and neural tissues. It is required for proper vertebral patterning and orofacial development. Signals through activin receptors type-2, ACVR2A and ACVR2B, and activin receptors type-1, ACVR1B, ACVR1C and TGFBR1 leading to the phosphorylation of SMAD2 and SMAD3. The sequence is that of Growth/differentiation factor 11 (Gdf11) from Mus musculus (Mouse).